We begin with the raw amino-acid sequence, 622 residues long: Chaperone protein HscA homolog (622 aa).

It belongs to the heat shock protein 70 family.

Functionally, chaperone involved in the maturation of iron-sulfur cluster-containing proteins. Has a low intrinsic ATPase activity which is markedly stimulated by HscB. This chain is Chaperone protein HscA homolog, found in Methylobacillus flagellatus (strain ATCC 51484 / DSM 6875 / VKM B-1610 / KT).